Here is a 412-residue protein sequence, read N- to C-terminus: Na(+)/H(+) antiporter NhaA 1 (412 aa).

Helical transmembrane passes span 34 to 54, 75 to 95, 114 to 134, 142 to 162, 183 to 203, 234 to 254, 282 to 302, 309 to 329, 349 to 369, and 379 to 399; these read VGGM…NSPA, LTIG…VAGL, LPVV…FAIG, AAWA…LSLT, LGAI…LALL, WIAV…LGLL, LIVP…EALV, VAIA…FGSS, LSAL…IAEL, and AKAA…VMLL.

The protein belongs to the NhaA Na(+)/H(+) (TC 2.A.33) antiporter family.

It localises to the cell membrane. The enzyme catalyses Na(+)(in) + 2 H(+)(out) = Na(+)(out) + 2 H(+)(in). Functionally, na(+)/H(+) antiporter that extrudes sodium in exchange for external protons. In Saccharopolyspora erythraea (strain ATCC 11635 / DSM 40517 / JCM 4748 / NBRC 13426 / NCIMB 8594 / NRRL 2338), this protein is Na(+)/H(+) antiporter NhaA 1.